Consider the following 725-residue polypeptide: Methionine--tRNA ligase (725 aa).

Residues 27–37 (PYANGQIHIGH) carry the 'HIGH' region motif. Zn(2+) contacts are provided by cysteine 158, cysteine 161, cysteine 171, and cysteine 174. The 'KMSKS' region motif lies at 348–352 (KMSKS). Lysine 351 lines the ATP pocket. The region spanning 619-725 (DFAKIDLRIA…SGAKPGMRVK (107 aa)) is the tRNA-binding domain.

Belongs to the class-I aminoacyl-tRNA synthetase family. MetG type 1 subfamily. In terms of assembly, homodimer. Zn(2+) is required as a cofactor.

It localises to the cytoplasm. It catalyses the reaction tRNA(Met) + L-methionine + ATP = L-methionyl-tRNA(Met) + AMP + diphosphate. Is required not only for elongation of protein synthesis but also for the initiation of all mRNA translation through initiator tRNA(fMet) aminoacylation. This Burkholderia pseudomallei (strain 1106a) protein is Methionine--tRNA ligase.